Here is a 449-residue protein sequence, read N- to C-terminus: Tol-Pal system protein TolB (449 aa).

An N-terminal signal peptide occupies residues 1–36 (MDCPNMPLHINRRQMLLSAATAAGALALGPARDAFG).

Belongs to the TolB family. As to quaternary structure, the Tol-Pal system is composed of five core proteins: the inner membrane proteins TolA, TolQ and TolR, the periplasmic protein TolB and the outer membrane protein Pal. They form a network linking the inner and outer membranes and the peptidoglycan layer.

The protein resides in the periplasm. Its function is as follows. Part of the Tol-Pal system, which plays a role in outer membrane invagination during cell division and is important for maintaining outer membrane integrity. The protein is Tol-Pal system protein TolB of Rhodopseudomonas palustris (strain HaA2).